Here is a 419-residue protein sequence, read N- to C-terminus: Acetyltransferase fsoF (419 aa).

A glycan (N-linked (GlcNAc...) asparagine) is linked at Asn2. The next 2 membrane-spanning stretches (helical) occupy residues 4–24 (TIISLALIFFQLTTTALVVGF) and 62–82 (AFLGAASVFLVILYVDAAILS). Residues 89–114 (QSPTSSLGGLIPPTTRDTPKTQNNAT) form a disordered region. N-linked (GlcNAc...) asparagine glycosylation is found at Asn112 and Asn169. 4 helical membrane-spanning segments follow: residues 230–250 (YWAIQYAVIDLLYSLLAVVAV), 314–334 (YVFMTLVFAVSGVFHTLSDVS), 337–357 (IPLGESGAMRFFVLQAIGIML), and 386–406 (VSGPVWLVTWLTWTSPGWIYM).

The protein belongs to the wax synthase family.

It localises to the membrane. The catalysed reaction is 3-O-(beta-D-glucopyranosyl)-2alpha-hydroxyisomotiol + acetyl-CoA = 3-O-(beta-D-glucopyranosyl)-2alpha-acetoxyisomotiol + CoA. It carries out the reaction 2-deacetylfuscoatroside + acetyl-CoA = fuscoatroside + CoA. Its pathway is secondary metabolite biosynthesis; terpenoid biosynthesis. Its function is as follows. Terpene cyclase-glycosyl transferase fusion protein; part of the gene cluster that mediates the biosynthesis of the enfumafungin-type antibiotic, fuscoatroside. Within the pathway, fsoF catalyzes the acetylation of C2-alpha-OH following the C2 hydroxylation by the cytochrome monooxygenase fsoD. The fuscoatroside biosynthesis is initiated by the cyclization of 2,3(S)-oxidosqualene through FsoA's terpene cyclase (TC) domain, leading to the formation of the fernane skeleton isomotiol, harboring a fernane triterpene skeleton with a C8-C9 double bond. Subsequently, C2-alpha-hydroxylation mediated by fsoD results in the production of 2-alpha-hydroxy-isomotiol, which is further acetylated by fsoF. The glycosyltransferase (GT) domain of FsoA may convert isomotiol, 2-alpha-hydroxy-isomotiol, and the acetylated derivative of 2-alpha-hydroxy-isomotiol into their corresponding glycosides 3-O-(beta-D-glucopyranosyl)-isomotiol, 3-O-(beta-D-glucopyranosyl)-2-alpha-hydroxy-isomotiol, and 3-O-(beta-D-glucopyranosyl)-2-alpha-acetoxy-isomotiol, which then undergo oxidative cleavage under the action of fsoE to form s 2-deacetoxy-fuscoatroside, 2-deacetyl-fuscoatroside, and fuscoatroside, respectively. Although hydroxylation followed by acetylation of 3-O-(beta-D-glucopyranosyl)-isomotiol and 2-deacetoxy-fuscoatroside by fsoD and fsoF could not be ruled out, this process is likely to occur with difficulty due to bulky steric hindrance caused by the presence of a glycan at C3 in these compounds. Interestingly, fsoE can also utilize the aglycones isomotiol and 2-alpha-hydroxy-isomotiol as substrates to generate 19-beta-hydroxy-isomotiol and 2-alpha,19-beta-dihydroxy-isomotiol, respectively. These reactions occur with lower efficiency. Finally, fsoE can further convert 2-alpha,19-beta-dihydroxy-isomotiol into 2-alpha-hydroxy-ismotiol-19-one and 2-alpha-hydroxy-ismotiol-19-one into 2-deacetyl-3-deglucopyranosyl-fuscoatroside. The polypeptide is Acetyltransferase fsoF (Humicola fuscoatra).